Here is a 116-residue protein sequence, read N- to C-terminus: Protein lin-52 homolog (116 aa).

Ser28 and Ser53 each carry phosphoserine.

This sequence belongs to the lin-52 family. As to quaternary structure, component of the DREAM complex (also named LINC complex) at least composed of E2F4, E2F5, LIN9, LIN37, LIN52, LIN54, MYBL1, MYBL2, RBL1, RBL2, RBBP4, TFDP1 and TFDP2. The complex exists in quiescent cells where it represses cell cycle-dependent genes. It dissociates in S phase when LIN9, LIN37, LIN52 and LIN54 form a subcomplex that binds to MYBL2.

This Homo sapiens (Human) protein is Protein lin-52 homolog (LIN52).